A 491-amino-acid chain; its full sequence is Protein DETOXIFICATION 20 (491 aa).

12 helical membrane-spanning segments follow: residues 37–57 (LWVV…VSMV), 75–95 (ITFT…AGAL), 120–140 (IVLT…GPIL), 156–176 (LALW…CQMF), 185–205 (IISY…WLLV), 214–234 (GAMT…LLYV), 265–285 (GGML…TGNL), 296–316 (AICI…LAAV), 337–357 (LIAV…FLFL), 381–401 (LLAF…VAIG), 413–433 (LACY…VVGL), and 438–458 (VWIG…VMTL).

This sequence belongs to the multi antimicrobial extrusion (MATE) (TC 2.A.66.1) family.

It localises to the membrane. The chain is Protein DETOXIFICATION 20 from Arabidopsis thaliana (Mouse-ear cress).